Consider the following 663-residue polypeptide: Alpha-1,4-glucan:maltose-1-phosphate maltosyltransferase (663 aa).

The disordered stretch occupies residues 238 to 266; sequence IGETNRKGPDDAPEAGPDDPGSPWAIGGF. Alpha-maltose 1-phosphate contacts are provided by Lys-244, Gln-309, and Asp-344. The active-site Nucleophile is the Asp-380. Residue Asn-381 coordinates alpha-maltose 1-phosphate. The active-site Proton donor is the Glu-409. 521–522 contacts alpha-maltose 1-phosphate; the sequence is KY.

It belongs to the glycosyl hydrolase 13 family. GlgE subfamily. As to quaternary structure, homodimer.

The enzyme catalyses alpha-maltose 1-phosphate + [(1-&gt;4)-alpha-D-glucosyl](n) = [(1-&gt;4)-alpha-D-glucosyl](n+2) + phosphate. Functionally, maltosyltransferase that uses maltose 1-phosphate (M1P) as the sugar donor to elongate linear or branched alpha-(1-&gt;4)-glucans. Is involved in a branched alpha-glucan biosynthetic pathway from trehalose, together with TreS, Mak and GlgB. The protein is Alpha-1,4-glucan:maltose-1-phosphate maltosyltransferase of Salinibacter ruber (strain DSM 13855 / M31).